The sequence spans 272 residues: MARLAAFDMDGTLLMPNHHLGHETLATLARLRERDITLTFATGRHVLEMRHILGAISMDAFLITGNGTRIHSQEGDMLHRQDLDPAIADRVLHQAWDTRASMHVFNDNGWFTGSAIPALLQAHVYSGFHYQIVDVKRIPAHQVTKICFCGDHDDLIRLRIQLNEALGERANLCFSAVDCLEVLPLGCNKGSALAVLSDHLGLSLTECMAFGDAMNDREMLESVGRGLIMGNAMPQLIAELPHLSVIGHCRNQAVSHFLTHWLDNPHLPYSPE.

Asp8 functions as the Nucleophile in the catalytic mechanism. Mg(2+) is bound by residues Asp8, Asp10, and Asp212.

The protein belongs to the HAD-like hydrolase superfamily. Cof family. It depends on Mg(2+) as a cofactor.

The catalysed reaction is 4-amino-2-methyl-5-(diphosphooxymethyl)pyrimidine + H2O = 4-amino-2-methyl-5-(phosphooxymethyl)pyrimidine + phosphate + H(+). Catalyzes the hydrolysis of 4-amino-2-methyl-5-hydroxymethylpyrimidine pyrophosphate (HMP-PP) to 4-amino-2-methyl-5-hydroxymethylpyrimidine phosphate (HMP-P). In Citrobacter koseri (strain ATCC BAA-895 / CDC 4225-83 / SGSC4696), this protein is HMP-PP phosphatase.